A 262-amino-acid chain; its full sequence is MRRYSPPYYSPPRRGYGGRGRSPPPPPPRRGYGGGGGGGGRRGSSHGSLLVRNIPLDCRPEELREPFERFGPVRDVYIPRDYYSGQPRGFAFVEFVDAYDAGEAQRSMNRRSFAGREITVVVASESRKRPEEMRVKTRTRSREPSGSRDRSHGRSRSRSISRSRSPRRPSDSRSRYRSRSYSPAPRRRGGPPRGEEDENYSRRSYSPGYEGAAAAAPDRDRNGDNEIREKPGYEAEDRRRGGRAVSRSPSGSRSRSVEVSPR.

Positions 1–14 are enriched in low complexity; that stretch reads MRRYSPPYYSPPRR. Disordered regions lie at residues 1-48 and 123-262; these read MRRY…SHGS and ASES…VSPR. Phosphoserine is present on residues S5, S10, and S22. Over residues 31–42 the composition is skewed to gly residues; that stretch reads GYGGGGGGGGRR. Positions 47–125 constitute an RRM domain; that stretch reads GSLLVRNIPL…REITVVVASE (79 aa). Over residues 125-152 the composition is skewed to basic and acidic residues; it reads ESRKRPEEMRVKTRTRSREPSGSRDRSH. Positions 153–167 are enriched in basic residues; that stretch reads GRSRSRSISRSRSPR. Phosphoserine is present on residues S182, S204, and S206. Y209 carries the phosphotyrosine modification. Over residues 217–239 the composition is skewed to basic and acidic residues; sequence PDRDRNGDNEIREKPGYEAEDRR. Residues 243–262 show a composition bias toward low complexity; it reads RAVSRSPSGSRSRSVEVSPR. A phosphoserine mark is found at S254, S256, and S260.

Belongs to the splicing factor SR family. SCL subfamily. In terms of assembly, component of the spliceosome. Interacts with RS2Z33, CYP59, CYP63 and CYP95. Post-translationally, phosphorylated.

It is found in the nucleus speckle. Functionally, involved in intron recognition and spliceosome assembly. Probably active at the 5' splice sites. This is Serine/arginine-rich SC35-like splicing factor SCL30 (SCL30) from Arabidopsis thaliana (Mouse-ear cress).